We begin with the raw amino-acid sequence, 491 residues long: MANYFNTLNLRQQLAQLGKCRFMGRDEFADGASYLQGKKVVIVGCGAQGLNQGLNMRDSGLDISYALRKEAIAEKRASWRKATENGFKVGTYEELIPQADLVVNLTPDKQHSDVVRSVQPLMKDGAALGYSHGFNIVEVGEQIRKDITVVMVAPKCPGTEVREEYKRGFGVPTLIAVHPENDPKGEGMAIAKAWAAATGGHRAGVLESSFVAEVKSDLMGEQTILCGMLQAGSLLCFDKLVAEGTDPAYAEKLIQFGWENITEALKQGGITLMMDRLSNPAKLRAYALSEQLKEIMAPLFQKHMDDIISGEFSSGMMADWANDDKKLLTWREETGKTAFETAPQFEGKIGEQEYFDKGVLMIAMVKAGVELAFETMVDSGIIEESAYYESLHELPLIANTIARKRLYEMNVVISDTAEYGNYLFSYACVPLLKPFMAELQPGDLGSAIPEGAVDNAQLRDVNDAIRSHAIEQVGKKLRGYMTDMKRIAVAG.

The KARI N-terminal Rossmann domain maps to 15–208 (AQLGKCRFMG…GGHRAGVLES (194 aa)). NADP(+)-binding positions include 45–48 (CGAQ), arginine 68, arginine 76, serine 78, and 108–110 (DKQ). Histidine 132 is a catalytic residue. NADP(+) is bound at residue glycine 158. 2 KARI C-terminal knotted domains span residues 209–344 (SFVA…TAPQ) and 345–484 (FEGK…MTDM). Positions 217, 221, 389, and 393 each coordinate Mg(2+). A substrate-binding site is contributed by serine 414.

It belongs to the ketol-acid reductoisomerase family. The cofactor is Mg(2+).

The catalysed reaction is (2R)-2,3-dihydroxy-3-methylbutanoate + NADP(+) = (2S)-2-acetolactate + NADPH + H(+). It catalyses the reaction (2R,3R)-2,3-dihydroxy-3-methylpentanoate + NADP(+) = (S)-2-ethyl-2-hydroxy-3-oxobutanoate + NADPH + H(+). It participates in amino-acid biosynthesis; L-isoleucine biosynthesis; L-isoleucine from 2-oxobutanoate: step 2/4. Its pathway is amino-acid biosynthesis; L-valine biosynthesis; L-valine from pyruvate: step 2/4. In terms of biological role, involved in the biosynthesis of branched-chain amino acids (BCAA). Catalyzes an alkyl-migration followed by a ketol-acid reduction of (S)-2-acetolactate (S2AL) to yield (R)-2,3-dihydroxy-isovalerate. In the isomerase reaction, S2AL is rearranged via a Mg-dependent methyl migration to produce 3-hydroxy-3-methyl-2-ketobutyrate (HMKB). In the reductase reaction, this 2-ketoacid undergoes a metal-dependent reduction by NADPH to yield (R)-2,3-dihydroxy-isovalerate. The chain is Ketol-acid reductoisomerase (NADP(+)) from Salmonella dublin (strain CT_02021853).